We begin with the raw amino-acid sequence, 81 residues long: Large ribosomal subunit protein bL28 (81 aa).

This sequence belongs to the bacterial ribosomal protein bL28 family. Part of the 50S ribosomal subunit.

This Deinococcus radiodurans (strain ATCC 13939 / DSM 20539 / JCM 16871 / CCUG 27074 / LMG 4051 / NBRC 15346 / NCIMB 9279 / VKM B-1422 / R1) protein is Large ribosomal subunit protein bL28.